The chain runs to 259 residues: Deoxyribose-phosphate aldolase (259 aa).

D104 acts as the Proton donor/acceptor in catalysis. Residue K168 is the Schiff-base intermediate with acetaldehyde of the active site. Residue K200 is the Proton donor/acceptor of the active site.

Belongs to the DeoC/FbaB aldolase family. DeoC type 2 subfamily.

Its subcellular location is the cytoplasm. It catalyses the reaction 2-deoxy-D-ribose 5-phosphate = D-glyceraldehyde 3-phosphate + acetaldehyde. Its pathway is carbohydrate degradation; 2-deoxy-D-ribose 1-phosphate degradation; D-glyceraldehyde 3-phosphate and acetaldehyde from 2-deoxy-alpha-D-ribose 1-phosphate: step 2/2. In terms of biological role, catalyzes a reversible aldol reaction between acetaldehyde and D-glyceraldehyde 3-phosphate to generate 2-deoxy-D-ribose 5-phosphate. The chain is Deoxyribose-phosphate aldolase from Agrobacterium fabrum (strain C58 / ATCC 33970) (Agrobacterium tumefaciens (strain C58)).